The following is a 404-amino-acid chain: Endophilin-B2 (404 aa).

An N-acetylmethionine modification is found at Met1. The membrane-binding amphipathic helix stretch occupies residues 1–27 (MDFNMKKLASDAGIFFTRAVQFTEEKF). The residue at position 10 (Ser10) is a Phosphoserine. Residues 24-291 (EEKFGQAEKT…LGSSQGAIFP (268 aa)) enclose the BAR domain. A coiled-coil region spans residues 209–239 (SASALWNDEVDKAEQELRAAQTEFDRQAEVT). The region spanning 344 to 404 (SGTRKARVLY…VPVTYLELLS (61 aa)) is the SH3 domain. Position 404 is a phosphoserine (Ser404).

Belongs to the endophilin family. As to quaternary structure, homodimer, and heterodimer with SH3GLB1.

Its subcellular location is the cytoplasm. This is Endophilin-B2 from Rattus norvegicus (Rat).